A 182-amino-acid chain; its full sequence is NAD(P)H-quinone oxidoreductase subunit J (182 aa).

The protein belongs to the complex I 30 kDa subunit family. NDH-1 can be composed of about 15 different subunits; different subcomplexes with different compositions have been identified which probably have different functions.

It localises to the cellular thylakoid membrane. The enzyme catalyses a plastoquinone + NADH + (n+1) H(+)(in) = a plastoquinol + NAD(+) + n H(+)(out). The catalysed reaction is a plastoquinone + NADPH + (n+1) H(+)(in) = a plastoquinol + NADP(+) + n H(+)(out). In terms of biological role, NDH-1 shuttles electrons from an unknown electron donor, via FMN and iron-sulfur (Fe-S) centers, to quinones in the respiratory and/or the photosynthetic chain. The immediate electron acceptor for the enzyme in this species is believed to be plastoquinone. Couples the redox reaction to proton translocation, and thus conserves the redox energy in a proton gradient. Cyanobacterial NDH-1 also plays a role in inorganic carbon-concentration. This Synechococcus sp. (strain WH7803) protein is NAD(P)H-quinone oxidoreductase subunit J.